Here is a 137-residue protein sequence, read N- to C-terminus: Large ribosomal subunit protein uL16 (137 aa).

This sequence belongs to the universal ribosomal protein uL16 family. Part of the 50S ribosomal subunit.

Its function is as follows. Binds 23S rRNA and is also seen to make contacts with the A and possibly P site tRNAs. The sequence is that of Large ribosomal subunit protein uL16 from Wolbachia pipientis subsp. Culex pipiens (strain wPip).